Here is a 377-residue protein sequence, read N- to C-terminus: Ribosomal RNA large subunit methyltransferase G (377 aa).

This sequence belongs to the methyltransferase superfamily. RlmG family.

Its subcellular location is the cytoplasm. It carries out the reaction guanosine(1835) in 23S rRNA + S-adenosyl-L-methionine = N(2)-methylguanosine(1835) in 23S rRNA + S-adenosyl-L-homocysteine + H(+). Its function is as follows. Specifically methylates the guanine in position 1835 (m2G1835) of 23S rRNA. The polypeptide is Ribosomal RNA large subunit methyltransferase G (Shewanella oneidensis (strain ATCC 700550 / JCM 31522 / CIP 106686 / LMG 19005 / NCIMB 14063 / MR-1)).